The following is a 365-amino-acid chain: Class I histocompatibility antigen, Gogo-A*0501 alpha chain (365 aa).

The signal sequence occupies residues 1-24; that stretch reads MAVVAPRTLLLLLSGALALTQTWA. An alpha-1 region spans residues 25–114; it reads GSHSMRYFST…ALRYYNQSED (90 aa). Topologically, residues 25 to 308 are extracellular; sequence GSHSMRYFST…EPSSQPTIPI (284 aa). Asn-110 carries N-linked (GlcNAc...) asparagine glycosylation. Residues 115–206 are alpha-2; sequence GSHTIQRMYG…ENGKETLQRT (92 aa). 2 disulfides stabilise this stretch: Cys-125–Cys-188 and Cys-227–Cys-283. An alpha-3 region spans residues 207 to 298; it reads DAPKTHTTHQ…GLPKPLTLRW (92 aa). In terms of domain architecture, Ig-like C1-type spans 209–295; sequence PKTHTTHQAV…QHEGLPKPLT (87 aa). The interval 299–308 is connecting peptide; the sequence is EPSSQPTIPI. A helical membrane pass occupies residues 309 to 332; sequence VGIIAGLVLFGAVIAGAVVAAVRW. The Cytoplasmic segment spans residues 333-365; sequence RRKSSDRKGGSYSQAASSDSAQGSDVSLTACKV. Positions 338 to 365 are disordered; that stretch reads DRKGGSYSQAASSDSAQGSDVSLTACKV. A compositionally biased stretch (low complexity) spans 342–359; that stretch reads GSYSQAASSDSAQGSDVS. Ser-343 is subject to Phosphoserine. At Tyr-344 the chain carries Phosphotyrosine. Phosphoserine occurs at positions 345, 349, 352, 356, and 359.

The protein belongs to the MHC class I family. In terms of assembly, heterodimer of an alpha chain and a beta chain (beta-2-microglobulin).

Its subcellular location is the membrane. Involved in the presentation of foreign antigens to the immune system. The sequence is that of Class I histocompatibility antigen, Gogo-A*0501 alpha chain from Gorilla gorilla gorilla (Western lowland gorilla).